Consider the following 429-residue polypeptide: DNA polymerase delta small subunit (429 aa).

Belongs to the DNA polymerase delta/II small subunit family. As to quaternary structure, heterodimer with subunits of 125 kDa and 50 kDa.

It localises to the nucleus. The catalysed reaction is DNA(n) + a 2'-deoxyribonucleoside 5'-triphosphate = DNA(n+1) + diphosphate. In terms of biological role, the function of the small subunit is not yet clear. This is DNA polymerase delta small subunit (POLD2) from Oryza sativa subsp. japonica (Rice).